We begin with the raw amino-acid sequence, 41 residues long: Large ribosomal subunit protein bL36 (41 aa).

It belongs to the bacterial ribosomal protein bL36 family.

This chain is Large ribosomal subunit protein bL36, found in Opitutus terrae (strain DSM 11246 / JCM 15787 / PB90-1).